A 292-amino-acid polypeptide reads, in one-letter code: Ribosomal RNA small subunit methyltransferase A (292 aa).

Residues asparagine 28, leucine 30, glycine 55, glutamate 77, aspartate 103, and asparagine 123 each coordinate S-adenosyl-L-methionine.

This sequence belongs to the class I-like SAM-binding methyltransferase superfamily. rRNA adenine N(6)-methyltransferase family. RsmA subfamily.

Its subcellular location is the cytoplasm. The catalysed reaction is adenosine(1518)/adenosine(1519) in 16S rRNA + 4 S-adenosyl-L-methionine = N(6)-dimethyladenosine(1518)/N(6)-dimethyladenosine(1519) in 16S rRNA + 4 S-adenosyl-L-homocysteine + 4 H(+). Specifically dimethylates two adjacent adenosines (A1518 and A1519) in the loop of a conserved hairpin near the 3'-end of 16S rRNA in the 30S particle. May play a critical role in biogenesis of 30S subunits. In Methylobacterium radiotolerans (strain ATCC 27329 / DSM 1819 / JCM 2831 / NBRC 15690 / NCIMB 10815 / 0-1), this protein is Ribosomal RNA small subunit methyltransferase A.